The chain runs to 197 residues: MSLSIDVTSLPSISSNIFKNESSSTTSTLSGKSIGRNEQYVSSDIEAFNKYMLSKSPEDIGPSDSASNDPLTSFSIRSNAVKTNADAGVSMDSSTQSRPSSNVGCDQMDFSLTKGINVSASLDSCVSISTNHKKEKSKKDKSRKHYPRIEADSDSEDYVLDDSDSDDGKCKNCKYKKKYFALRMRMKQVAMQLIEDL.

Positions 16 to 36 (NIFKNESSSTTSTLSGKSIGR) are disordered. At Ser-67 the chain carries Phosphoserine; by host CK1. Asp-92 contacts Mg(2+). Residues 130–167 (TNHKKEKSKKDKSRKHYPRIEADSDSEDYVLDDSDSDD) are disordered. Residues 131 to 146 (NHKKEKSKKDKSRKHY) are compositionally biased toward basic residues. A compositionally biased stretch (acidic residues) spans 152–165 (DSDSEDYVLDDSDS). Residues Ser-153, Ser-155, Ser-163, and Ser-165 each carry the phosphoserine; by host modification.

It belongs to the rotavirus NSP5 family. In terms of assembly, homodimer. Interacts with VP1. Interacts with VP2. Interacts with NSP2; this interaction leads to up-regulation of NSP5 hyperphosphorylation and formation of virus factories. Interacts with NSP6. Participates in the selective exclusion of host proteins from stress granules (SG) and P bodies (PB). Also participates in the sequestration of these remodeled organelles in viral factories. It depends on Mg(2+) as a cofactor. Post-translationally, O-glycosylated. In terms of processing, hyperphosphorylated on serine residues, when in dimeric form. Phosphorylation by host CK1 is required for the hyperphosphorylation of NSP5 dimer.

It is found in the host cytoplasm. Plays an essential role in the viral genome replication. Participates, together with NSP2, in the formation of viral factories (viroplasms), which are large inclusions in the host cytoplasm where replication intermediates are assembled and viral RNA replication takes place. Orchestrates the recruitment of viroplasmic proteins such as capsid proteins to these factories. Participates in the selective exclusion of host proteins from stress granules (SG) and P bodies (PB). Also participates in the sequestration of these remodeled organelles in viral factories. This chain is Non-structural protein 5, found in Homo sapiens (Human).